The sequence spans 580 residues: mRNA-decapping enzyme 1A (580 aa).

Ser62 carries the phosphoserine modification. Basic and acidic residues predominate over residues 132–141 (RSQQAARDKQ). Disordered regions lie at residues 132–154 (RSQQ…DHRP), 172–209 (QMGD…QDKS), and 245–276 (LPGD…NMGI). 3 positions are modified to phosphoserine: Ser142, Ser179, and Ser180. The segment covering 173–196 (MGDSNISSPGLQPSTQISNLGSTE) has biased composition (polar residues). A compositionally biased stretch (low complexity) spans 253–264 (EPSSFLPFSFEP). 2 positions are modified to phosphoserine: Ser319 and Ser334. Over residues 343–359 (QAVKTTPRQRSPLSSQP) the composition is skewed to polar residues. The segment at 343-371 (QAVKTTPRQRSPLSSQPVPELSQASLAAS) is disordered. Position 348 is a phosphothreonine (Thr348). Residue Ser353 is modified to Phosphoserine. Position 376 is an asymmetric dimethylarginine (Arg376). The residue at position 401 (Thr401) is a Phosphothreonine. Ser422, Ser520, Ser521, and Ser523 each carry phosphoserine. The disordered stretch occupies residues 510–533 (TRSSDLERKASSPSPLTVGTSENQ). The span at 520 to 531 (SSPSPLTVGTSE) shows a compositional bias: polar residues. A phosphothreonine mark is found at Thr526 and Thr529.

This sequence belongs to the DCP1 family. As to quaternary structure, forms a complex with EDC3, DCP2, DDX6 and EDC4/HEDLS, within this complex directly interacts with EDC3. Part of a cytoplasmic complex containing proteins involved in mRNA decay, including XRN1 and LSM1. Interacts with DCP1B. Interacts with DCP2. Interacts with DDX17 in an RNA-independent manner. Interacts with PNRC2. Interacts with SMAD4. Interacts with UPF1. Interacts with ZC3HAV1. Interacts with ZFP36L1. Interacts with NBDY. Interacts with DHX34; the interaction is RNA-independent. Post-translationally, (Microbial infection) Cleaved by porcine reproductive and respiratory syndrome virus serine protease nsp4 after Glu-238. The cleavage inhibits DCP1A function.

Its subcellular location is the cytoplasm. It is found in the P-body. It localises to the nucleus. It carries out the reaction a 5'-end (N(7)-methyl 5'-triphosphoguanosine)-ribonucleoside in mRNA + H2O = N(7)-methyl-GDP + a 5'-end phospho-ribonucleoside in mRNA + 2 H(+). Necessary for the degradation of mRNAs, both in normal mRNA turnover and in nonsense-mediated mRNA decay. Removes the 7-methyl guanine cap structure from mRNA molecules, yielding a 5'-phosphorylated mRNA fragment and 7m-GDP. Contributes to the transactivation of target genes after stimulation by TGFB1. Essential for embryonic development. This chain is mRNA-decapping enzyme 1A (DCP1A), found in Sus scrofa (Pig).